A 2136-amino-acid chain; its full sequence is Protein CELLULOSE SYNTHASE INTERACTIVE 3 (2136 aa).

ARM repeat units follow at residues 27-66 (MEMDDPEKAMATVAQLIEQLHAKTSSPQDKELTTARLLGI), 71-111 (REAR…VLCK), 113-152 (KDLRLKVLLGGCIPPLLSVLKSGTMETRKAAAEAIYEVSS), 159-201 (HIGM…NLCG), 204-243 (DGYWRLTLEGSGVDIVVSLLSSDNPNSQANAASLLARLVL), 246-286 (CDSI…ALSA), 289-337 (DEAK…NVFG), 376-417 (PESS…SLYG), 419-458 (SSLSCYLDDAEAKRVLIALITMASADVRERLIICLSGLCH), 461-500 (VGIWEAIGKREGIQLFISFLGLSSEQHQEYAVEMLKILTA), 503-542 (DDSKWAVTAAGGIPPLVQLLETGSQKAKEDAACILWNLCC), 545-584 (EEIRDCVERAGGIPAFLWLLKTGGPNSQETSAKTLVKLVH), 586-618 (ADPATINQLLALLLGDDPTSKIQVIEVLGHVLS), 619-663 (KASQ…DLFS), 666-705 (QDICGHLATDDIINPWIKLLTNNTQNVAKQVARALDALSR), 711-750 (NNKKKSYIAEGDIKSLIKLAKNSSIESAENAVSALANLLS), 752-791 (PDIAAEALAEDVVSAFTRILADGSPEGKRNASRALHQLLK), 811-848 (SLVDSLKSIDVDSADAFNILEVVALLAKTKSGVNFSYP), 849-887 (PWIALAEVPSSLETLVQCLAEGHTLVQDKAIEVLSRLCS), 936-980 (QLIT…GFLE), 1013-1041 (SVDAKSKVIVMEAGGLEVLVGKLARYTSS), 1042-1083 (AQAE…TLAV), 1109-1149 (RGIN…SLVK), 1163-1204 (EDVR…RIAD), 1207-1247 (DTNK…VLFS), 1249-1288 (HELRQNEMALSSLNQLIAVLRLGSRSARYSAAGALNELFD), 1290-1329 (ENIRNSEIACQAVQPLMDILGSVSESEQEVALSALIKLSS), 1333-1375 (SNTA…VVFS), 1377-1416 (KNIRTSASASGCMKPLITLMQSERSAAVEAAVFAIKILLD), 1418-1457 (EQHLELAAAHNIQELLVGLVSGKNYVIIEASLSALIKLGK), 1460-1499 (VPRKLDMVEAGIIERCLELLPGASSSLCSAVVELFRILTN), 1518-1546 (AVLLRSDLTLWGQHSALQALVNILEKQQT), 1547-1585 (LEAFSFTPSEAIVPLISFLESSSQAIQQLGAELLSHFLT), 1587-1626 (EDFQQDITTQSAVVPLVRLAGIGILSLQETAIKALEKISA), 1628-1669 (WPKA…NILQ), 1670-1704 (YDAECFFRVELPVLVKLLFSTIESTVLLALKALML), 1710-1750 (ASST…NNPR), 1790-1833 (SQHE…NFVM), 1836-1875 (RTNRRAVAEAGGVLLIQELLLSCNPEVSGQAALMVKFLFS), 1921-1960 (PKLRASEAATFCIPHLVGALKSGVEDVQGLVLDILYLLRH), 1969-2008 (VAKSQAMIAAEAIPVLQMLMKTCPPRFHDKADSLLHCLPG), and 2010-2035 (LTVNVMRANNLKQSMATTNAFCQLTI). In terms of domain architecture, C2 spans 1989–2106 (KTCPPRFHDK…VTEGEYSGSL (118 aa)).

In terms of assembly, associates with cellulase synthase (CESA) complexes. Binds to cortical microtubules. Interacts with CESA3 and CESA6. In terms of tissue distribution, expressed in dark-grown hypocotyls, leaves (confined to vasculature and trichomes), stamen, pollen, developing siliques, and roots. Restricted in meristematic tissue of the shoot and root. Present in distinct punctae at the cell cortex, called microtubule-associated cellulose synthase compartments, that move with constant velocities of 10 to 3000 nm/min.

The protein localises to the cell membrane. It localises to the cytoplasm. Its subcellular location is the cytoskeleton. It is found in the endomembrane system. Functionally, regulator of the microtubular cytoskeleton. Microtubule-associated protein involved in the association of cellulase synthase (CESA) complexes (CSCs) and cortical microtubules. Promotes dynamics of CSCs in the plasma membrane in both microtubules-dependent and microtubules-independent manners. Regulates primary cell wall biosynthesis and cellulose microfibrils organization. The polypeptide is Protein CELLULOSE SYNTHASE INTERACTIVE 3 (Arabidopsis thaliana (Mouse-ear cress)).